We begin with the raw amino-acid sequence, 440 residues long: P47(GAG-CRK) protein (440 aa).

A gag first part region spans residues M1 to A208. A PPXY motif motif is present at residues P174–Y177. Residues Y183 to A230 are disordered. The CRK stretch occupies residues G209–T437. Residues A212–A221 are compositionally biased toward basic residues. The region spanning W248–V354 is the SH2 domain. The region spanning E368–P428 is the SH3 domain. Residues G438–R440 are gag second part.

The protein is P47(GAG-CRK) protein of Avian sarcoma virus CT10 (Avian sarcoma virus (strain CT10)).